A 283-amino-acid chain; its full sequence is MTSHGEEIEDEQISRIEKGNCKDSQGGMETAICSSPSIVCLTQKLIAEMIGTYFIIFSGCGVVVVNVLYGGTITFPGICVTWGLIVMVMIYSTGHISGAHFNPAVTVTFAVFRRFPWYQVPLYIGAQLTGSLLASLTLRLMFNVTPKAFFGTTPTDSSGQALVAEIIISFLLMFVISGVATDSRATGELAGIAVGMTIILNVFVAGPISGASMNPARSLGPAIVMGRYKGIWVYIVGPFVGIFAGGFVYNFMRFTDKPLRELTKSASFLRSVAQKDNASKSDG.

N-acetylmethionine is present on M1. Positions 1-21 (MTSHGEEIEDEQISRIEKGNC) are enriched in basic and acidic residues. A disordered region spans residues 1–23 (MTSHGEEIEDEQISRIEKGNCKD). A run of 2 helical transmembrane segments spans residues 51–71 (GTYF…LYGG) and 77–97 (GICV…GHIS). Residues 102–104 (NPA) carry the NPA 1 motif. The next 3 membrane-spanning stretches (helical) occupy residues 120–140 (VPLY…TLRL), 161–181 (ALVA…GVAT), and 189–209 (LAGI…GPIS). The short motif at 214–216 (NPA) is the NPA 2 element. A helical membrane pass occupies residues 231-251 (IWVYIVGPFVGIFAGGFVYNF). Position 267 is a phosphoserine (S267).

It belongs to the MIP/aquaporin (TC 1.A.8) family. NIP (TC 1.A.8.12) subfamily.

The protein localises to the membrane. Aquaporins facilitate the transport of water and small neutral solutes across cell membranes. The polypeptide is Probable aquaporin NIP4-2 (NIP4-2) (Arabidopsis thaliana (Mouse-ear cress)).